Reading from the N-terminus, the 662-residue chain is UvrABC system protein B (662 aa).

Positions 31-188 (DNIEGGEKAQ…NDLVDIQFER (158 aa)) constitute a Helicase ATP-binding domain. Residue 44–51 (GATGTGKT) participates in ATP binding. A Beta-hairpin motif is present at residues 97 to 120 (YYDYYQPEAYVPSSDTYIEKDSSV). Residues 435 to 601 (QIDDLLGEIN…TIKKEIRDLI (167 aa)) enclose the Helicase C-terminal domain. Positions 626–661 (KELVKKLEKQMQEAVEVLDFELAAQIRDMMLEVKAL) constitute a UVR domain.

Belongs to the UvrB family. In terms of assembly, forms a heterotetramer with UvrA during the search for lesions. Interacts with UvrC in an incision complex.

The protein localises to the cytoplasm. Functionally, the UvrABC repair system catalyzes the recognition and processing of DNA lesions. A damage recognition complex composed of 2 UvrA and 2 UvrB subunits scans DNA for abnormalities. Upon binding of the UvrA(2)B(2) complex to a putative damaged site, the DNA wraps around one UvrB monomer. DNA wrap is dependent on ATP binding by UvrB and probably causes local melting of the DNA helix, facilitating insertion of UvrB beta-hairpin between the DNA strands. Then UvrB probes one DNA strand for the presence of a lesion. If a lesion is found the UvrA subunits dissociate and the UvrB-DNA preincision complex is formed. This complex is subsequently bound by UvrC and the second UvrB is released. If no lesion is found, the DNA wraps around the other UvrB subunit that will check the other stand for damage. This is UvrABC system protein B from Streptococcus pneumoniae (strain Taiwan19F-14).